Here is a 944-residue protein sequence, read N- to C-terminus: Protein phosphatase 1 regulatory subunit 37 homolog (944 aa).

A disordered region spans residues 42–71 (QQQSHSAATSVRKKTCQDANSSGEDPNGRI). 5 LRR repeats span residues 203–224 (SCVR…TTIF), 232–255 (SLQM…CKMA), 262–282 (SLTC…LVLI), 290–311 (GLRE…HIYQ), and 318–338 (SLQL…RHIC). Residues 517–598 (EEGDSGVEKK…KERHQRFVRS (82 aa)) form a disordered region. A compositionally biased stretch (basic and acidic residues) spans 522–542 (GVEKKDGNECEGEDNKDRQDT). 2 stretches are compositionally biased toward polar residues: residues 543 to 554 (PAETENGVSSNE) and 567 to 585 (PESN…STSK). Positions 586-595 (LSRKERHQRF) are enriched in basic residues.

It belongs to the PPP1R37 family.

The protein is Protein phosphatase 1 regulatory subunit 37 homolog of Caenorhabditis elegans.